The sequence spans 864 residues: Translation initiation factor IF-2 (864 aa).

Residues 1 to 252 (MEDKNKTIKE…KTSSDKRDFS (252 aa)) are disordered. Residues 78-90 (KEVKYEESSRKQD) are compositionally biased toward basic and acidic residues. Over residues 106-120 (VRPSGDSSYPVSRSP) the composition is skewed to polar residues. The segment covering 150–212 (RGPGQGGGYQ…PGNRSGGPGG (63 aa)) has biased composition (gly residues). Basic and acidic residues predominate over residues 239 to 252 (HDKEKTSSDKRDFS). The tr-type G domain maps to 359–528 (NRPPVVTIMG…LLQAEVMDLK (170 aa)). Residues 368-375 (GHVDHGKT) are G1. 368–375 (GHVDHGKT) is a GTP binding site. Residues 393 to 397 (GITQH) form a G2 region. The segment at 414–417 (DTPG) is G3. GTP is bound by residues 414-418 (DTPGH) and 468-471 (NKID). Residues 468–471 (NKID) form a G4 region. A G5 region spans residues 504 to 506 (SAR).

This sequence belongs to the TRAFAC class translation factor GTPase superfamily. Classic translation factor GTPase family. IF-2 subfamily.

Its subcellular location is the cytoplasm. In terms of biological role, one of the essential components for the initiation of protein synthesis. Protects formylmethionyl-tRNA from spontaneous hydrolysis and promotes its binding to the 30S ribosomal subunits. Also involved in the hydrolysis of GTP during the formation of the 70S ribosomal complex. The protein is Translation initiation factor IF-2 of Leptospira borgpetersenii serovar Hardjo-bovis (strain L550).